The primary structure comprises 365 residues: UDP-N-acetylglucosamine--N-acetylmuramyl-(pentapeptide) pyrophosphoryl-undecaprenol N-acetylglucosamine transferase (365 aa).

UDP-N-acetyl-alpha-D-glucosamine-binding positions include 10–12 (TGG), N128, R170, S199, I250, and Q295.

This sequence belongs to the glycosyltransferase 28 family. MurG subfamily.

It localises to the cell inner membrane. It carries out the reaction di-trans,octa-cis-undecaprenyl diphospho-N-acetyl-alpha-D-muramoyl-L-alanyl-D-glutamyl-meso-2,6-diaminopimeloyl-D-alanyl-D-alanine + UDP-N-acetyl-alpha-D-glucosamine = di-trans,octa-cis-undecaprenyl diphospho-[N-acetyl-alpha-D-glucosaminyl-(1-&gt;4)]-N-acetyl-alpha-D-muramoyl-L-alanyl-D-glutamyl-meso-2,6-diaminopimeloyl-D-alanyl-D-alanine + UDP + H(+). The protein operates within cell wall biogenesis; peptidoglycan biosynthesis. In terms of biological role, cell wall formation. Catalyzes the transfer of a GlcNAc subunit on undecaprenyl-pyrophosphoryl-MurNAc-pentapeptide (lipid intermediate I) to form undecaprenyl-pyrophosphoryl-MurNAc-(pentapeptide)GlcNAc (lipid intermediate II). The sequence is that of UDP-N-acetylglucosamine--N-acetylmuramyl-(pentapeptide) pyrophosphoryl-undecaprenol N-acetylglucosamine transferase from Pelodictyon phaeoclathratiforme (strain DSM 5477 / BU-1).